The following is a 328-amino-acid chain: Zinc chaperone YeiR (328 aa).

9-17 (GFLGSGKTT) contributes to the GTP binding site. The short motif at 63 to 66 (CMCC) is the CXCC motif element. Asp-155 is a binding site for GTP. One can recognise a CobW C-terminal domain in the interval 241–321 (CGWIFDADTV…WNALQSALLK (81 aa)).

This sequence belongs to the SIMIBI class G3E GTPase family. ZNG1 subfamily. Oligomerizes in the presence of Zn(2+).

The catalysed reaction is GTP + H2O = GDP + phosphate + H(+). GTPase activity is enhanced by Zn(2+) binding. In terms of biological role, zinc chaperone that directly transfers zinc cofactor to target proteins, thereby activating them. Zinc is transferred from the CXCC motif in the GTPase domain to the zinc binding site in target proteins in a process requiring GTP hydrolysis. In Escherichia coli (strain K12), this protein is Zinc chaperone YeiR (yeiR).